The primary structure comprises 50 residues: Protein hunchback (50 aa).

3 C2H2-type zinc fingers span residues 1–5 (HILKH), 11–33 (IRCP…MKSH), and 39–50 (YRCLDCNYATKY).

The protein belongs to the hunchback C2H2-type zinc-finger protein family.

The protein localises to the nucleus. Gap class segmentation protein that controls development of head structures. This is Protein hunchback (hb) from Bradysia coprophila (Dark-winged fungus gnat).